Here is a 320-residue protein sequence, read N- to C-terminus: Rhomboid-like protein 17, chloroplastic (320 aa).

The transit peptide at 1-87 (MHAIFSSFSR…LKFGNVMESR (87 aa)) directs the protein to the chloroplast. 5 helical membrane-spanning segments follow: residues 116-136 (WING…AVFT), 160-180 (LITS…MIGI), 199-219 (LYFA…ALLA), 247-267 (MFAI…YFAL), and 295-315 (IASS…WARI).

Belongs to the peptidase S54 family.

The protein resides in the plastid. It is found in the chloroplast membrane. Functionally, probable rhomboid-type serine protease that catalyzes intramembrane proteolysis. In Arabidopsis thaliana (Mouse-ear cress), this protein is Rhomboid-like protein 17, chloroplastic.